We begin with the raw amino-acid sequence, 115 residues long: NADH-ubiquinone oxidoreductase chain 3 (115 aa).

3 consecutive transmembrane segments (helical) span residues 3–23, 55–75, and 87–107; these read LMLV…IAFW, FFLV…LLPL, and VLIM…YEWI.

It belongs to the complex I subunit 3 family. Core subunit of respiratory chain NADH dehydrogenase (Complex I) which is composed of 45 different subunits. Interacts with TMEM186. Interacts with TMEM242.

It is found in the mitochondrion inner membrane. The enzyme catalyses a ubiquinone + NADH + 5 H(+)(in) = a ubiquinol + NAD(+) + 4 H(+)(out). Its function is as follows. Core subunit of the mitochondrial membrane respiratory chain NADH dehydrogenase (Complex I) which catalyzes electron transfer from NADH through the respiratory chain, using ubiquinone as an electron acceptor. Essential for the catalytic activity of complex I. This is NADH-ubiquinone oxidoreductase chain 3 from Oryctolagus cuniculus (Rabbit).